A 245-amino-acid polypeptide reads, in one-letter code: Ureidoacrylate amidohydrolase RutB (245 aa).

Asp-38 (proton acceptor) is an active-site residue. Lys-147 is a catalytic residue. Cys-180 serves as the catalytic Nucleophile.

Belongs to the isochorismatase family. RutB subfamily.

The catalysed reaction is (Z)-3-ureidoacrylate + H2O + H(+) = (Z)-3-aminoacrylate + NH4(+) + CO2. It carries out the reaction (Z)-3-ureidoacrylate + H2O = (Z)-3-aminoacrylate + carbamate + H(+). The enzyme catalyses (Z)-2-methylureidoacrylate + H2O + H(+) = (Z)-2-methylaminoacrylate + NH4(+) + CO2. Functionally, hydrolyzes ureidoacrylate to form aminoacrylate and carbamate. The carbamate hydrolyzes spontaneously, thereby releasing one of the nitrogen atoms of the pyrimidine ring as ammonia and one of its carbon atoms as CO2. The sequence is that of Ureidoacrylate amidohydrolase RutB from Acinetobacter baylyi (strain ATCC 33305 / BD413 / ADP1).